The chain runs to 65 residues: MPKMKTHKGAAGRFEVMKRGKLRRRRAGHNHILEKKTSKRKRRLNTETYVNPADEKRVRRLLGVR.

This sequence belongs to the bacterial ribosomal protein bL35 family.

The sequence is that of Large ribosomal subunit protein bL35 from Rubrobacter xylanophilus (strain DSM 9941 / JCM 11954 / NBRC 16129 / PRD-1).